Here is a 251-residue protein sequence, read N- to C-terminus: uncharacterized protein (251 aa).

An N-terminal signal peptide occupies residues 1–18 (MKILIILSIILCSLFGRA).

This sequence belongs to the MlaA family.

This is an uncharacterized protein from Rickettsia prowazekii (strain Madrid E).